Reading from the N-terminus, the 279-residue chain is Small ribosomal subunit protein uS2 (279 aa).

The segment at 255–279 (LLAGATTAAPEAAAGEAAAAPEQSS) is disordered.

The protein belongs to the universal ribosomal protein uS2 family.

The sequence is that of Small ribosomal subunit protein uS2 from Mycolicibacterium gilvum (strain PYR-GCK) (Mycobacterium gilvum (strain PYR-GCK)).